Here is a 247-residue protein sequence, read N- to C-terminus: Caffeoyl-CoA O-methyltransferase 2 (247 aa).

Substrate is bound at residue Lys-21. S-adenosyl-L-methionine is bound by residues Thr-63, Glu-85, 87 to 88 (GV), Ser-93, Asp-111, and Ala-140. Substrate is bound at residue Asp-163. Asp-163 serves as a coordination point for a divalent metal cation. Asp-165 is an S-adenosyl-L-methionine binding site. 2 residues coordinate a divalent metal cation: Asp-189 and Asn-190. Asn-194 contacts substrate.

Belongs to the class I-like SAM-binding methyltransferase superfamily. Cation-dependent O-methyltransferase family. CCoAMT subfamily. Requires a divalent metal cation as cofactor.

The enzyme catalyses (E)-caffeoyl-CoA + S-adenosyl-L-methionine = (E)-feruloyl-CoA + S-adenosyl-L-homocysteine + H(+). It functions in the pathway aromatic compound metabolism; phenylpropanoid biosynthesis. Methylates caffeoyl-CoA to feruloyl-CoA and 5-hydroxyferuloyl-CoA to sinapoyl-CoA. Plays a role in the synthesis of feruloylated polysaccharides. Involved in the reinforcement of the plant cell wall. Also involved in the responding to wounding or pathogen challenge by the increased formation of cell wall-bound ferulic acid polymers. The sequence is that of Caffeoyl-CoA O-methyltransferase 2 (CCOAOMT2) from Eucalyptus globulus (Tasmanian blue gum).